Here is a 952-residue protein sequence, read N- to C-terminus: Glutamate receptor 2.7 (952 aa).

The signal sequence occupies residues 1–32; the sequence is MKVMNPRKTNNTFMYYFVLFVCGFVLMEGCLG. The Extracellular segment spans residues 33–582; sequence QNQTTEIKVG…NTWVFLRPWS (550 aa). N-linked (GlcNAc...) asparagine glycosylation is found at asparagine 34, asparagine 60, asparagine 355, asparagine 428, and asparagine 546. A helical membrane pass occupies residues 583–603; it reads LDLWVTTACFFVFIGFIVWIL. The Cytoplasmic portion of the chain corresponds to 604-612; sequence EHRVNTDFR. A helical transmembrane segment spans residues 613–633; it reads GPPHHQIGTSFWFAFSTMNFA. Over 634-637 the chain is Cytoplasmic; that stretch reads HREK. A helical transmembrane segment spans residues 638–658; sequence VVSNLARFVVLVWCFVVLVLI. At 659 to 821 the chain is on the extracellular side; that stretch reads QSYTANLTSF…LSSNHLSLSS (163 aa). N-linked (GlcNAc...) asparagine glycans are attached at residues asparagine 664, asparagine 728, asparagine 748, asparagine 784, and asparagine 809. A helical transmembrane segment spans residues 822–842; sequence FWGLFLIAGIASFLALLIFVA. Residues 843-952 lie on the Cytoplasmic side of the membrane; it reads NFLYEHKHTL…ESAIIQCEGE (110 aa). The span at 889–908 shows a compositional bias: polar residues; it reads VSSPITQGSSSPLTDQSTPL. Disordered regions lie at residues 889-914 and 932-952; these read VSSP…SPEQ and FTTQ…CEGE.

Belongs to the glutamate-gated ion channel (TC 1.A.10.1) family. In terms of assembly, may form heteromers. As to expression, expressed predominantly in leaves.

The protein localises to the membrane. Functionally, glutamate-gated receptor that probably acts as a non-selective cation channel. May be involved in light-signal transduction and calcium homeostasis via the regulation of calcium influx into cells. The protein is Glutamate receptor 2.7 (GLR2.7) of Arabidopsis thaliana (Mouse-ear cress).